A 364-amino-acid chain; its full sequence is Cobalt-precorrin-5B C(1)-methyltransferase (364 aa).

It belongs to the CbiD family.

The enzyme catalyses Co-precorrin-5B + S-adenosyl-L-methionine = Co-precorrin-6A + S-adenosyl-L-homocysteine. It functions in the pathway cofactor biosynthesis; adenosylcobalamin biosynthesis; cob(II)yrinate a,c-diamide from sirohydrochlorin (anaerobic route): step 6/10. Its function is as follows. Catalyzes the methylation of C-1 in cobalt-precorrin-5B to form cobalt-precorrin-6A. The protein is Cobalt-precorrin-5B C(1)-methyltransferase of Pseudomonas putida (strain W619).